Here is a 47-residue protein sequence, read N- to C-terminus: Fasciclin-like arabinogalactan protein (47 aa).

The region spanning 1-47 (APTPATLNGLTIFAPNDEAFKATGVPDLSKLSNAPMVSLLQYHAAAR) is the FAS1 domain.

This sequence belongs to the fasciclin-like AGP family.

Its function is as follows. May be a cell surface adhesion protein. The chain is Fasciclin-like arabinogalactan protein from Jatropha curcas (Barbados nut).